Reading from the N-terminus, the 443-residue chain is ATP-dependent protease ATPase subunit HslU (443 aa).

ATP contacts are provided by residues Val-18 and 60–65 (GVGKTE). The interval 136-158 (LPPPRDFNEDSQRTNADSSTRQL) is disordered. Polar residues predominate over residues 148 to 157 (RTNADSSTRQ). ATP contacts are provided by Asp-256, Glu-321, and Arg-393.

This sequence belongs to the ClpX chaperone family. HslU subfamily. In terms of assembly, a double ring-shaped homohexamer of HslV is capped on each side by a ring-shaped HslU homohexamer. The assembly of the HslU/HslV complex is dependent on binding of ATP.

Its subcellular location is the cytoplasm. ATPase subunit of a proteasome-like degradation complex; this subunit has chaperone activity. The binding of ATP and its subsequent hydrolysis by HslU are essential for unfolding of protein substrates subsequently hydrolyzed by HslV. HslU recognizes the N-terminal part of its protein substrates and unfolds these before they are guided to HslV for hydrolysis. The sequence is that of ATP-dependent protease ATPase subunit HslU from Marinobacter nauticus (strain ATCC 700491 / DSM 11845 / VT8) (Marinobacter aquaeolei).